The sequence spans 143 residues: Ribonuclease H (143 aa).

The RNase H type-1 domain maps to 1–140 (MKVEIYTDGA…VDALANLGIE (140 aa)). The Mg(2+) site is built by Asp8, Glu46, Asp68, and Asp132.

Belongs to the RNase H family. In terms of assembly, monomer. Requires Mg(2+) as cofactor.

Its subcellular location is the cytoplasm. The catalysed reaction is Endonucleolytic cleavage to 5'-phosphomonoester.. Its function is as follows. Endonuclease that specifically degrades the RNA of RNA-DNA hybrids. In Legionella pneumophila (strain Lens), this protein is Ribonuclease H.